A 228-amino-acid polypeptide reads, in one-letter code: Small ribosomal subunit protein uS3 (228 aa).

A KH type-2 domain is found at 39 to 107 (IRKELNEKLK…PVNINIEEIK (69 aa)).

Belongs to the universal ribosomal protein uS3 family. Part of the 30S ribosomal subunit. Forms a tight complex with proteins S10 and S14.

Functionally, binds the lower part of the 30S subunit head. Binds mRNA in the 70S ribosome, positioning it for translation. The chain is Small ribosomal subunit protein uS3 from Hydrogenovibrio crunogenus (strain DSM 25203 / XCL-2) (Thiomicrospira crunogena).